The sequence spans 368 residues: UV excision repair protein rhp23 (368 aa).

The 77-residue stretch at 1–77 (MNLTFKNLQQ…IVCMVSRPKT (77 aa)) folds into the Ubiquitin-like domain. 2 stretches are compositionally biased toward low complexity: residues 76 to 88 (KTST…AASP) and 103 to 124 (APSS…AAPS). The disordered stretch occupies residues 76-134 (KTSTSTPKSAASPAPNPPASVPEKKVEAPSSTVAESTSTTQTVAAAAPSNPDTTATSEA). S84 and S87 each carry phosphoserine. 2 UBA domains span residues 135–185 (PIDA…LLTG) and 320–360 (QEES…LFEH). The residue at position 364 (S364) is a Phosphoserine.

Its subcellular location is the nucleus. Its function is as follows. Involved in postreplication repair of UV-damaged DNA. Postreplication repair functions in gap-filling of a daughter strand on replication of damaged DNA. In terms of biological role, protects ubiquitin chains against dissambly by deubiquitinating enzymes thereby promoting protein degradation. The polypeptide is UV excision repair protein rhp23 (rhp23) (Schizosaccharomyces pombe (strain 972 / ATCC 24843) (Fission yeast)).